Here is a 910-residue protein sequence, read N- to C-terminus: Staphylococcal nuclease domain-containing protein 1 (910 aa).

Alanine 2 is subject to N-acetylalanine. TNase-like domains lie at 18–166, 193–328, and 341–496; these read TVQR…MWSE, KPVN…IWRD, and KQFV…LHSK. Residue threonine 103 is modified to Phosphothreonine. Lysine 193 is subject to N6-acetyllysine. 2 positions are modified to phosphothreonine: threonine 235 and threonine 240. 2 consecutive short sequence motifs (nuclear localization signal) follow at residues 321–325 and 388–392; these read RRLRI and KKLRP. Residue serine 426 is modified to Phosphoserine. Lysine 513 is covalently cross-linked (Glycyl lysine isopeptide (Lys-Gly) (interchain with G-Cter in SUMO2)). In terms of domain architecture, TNase-like 4 spans 525 to 660; it reads GRSEAVVEYV…KQRKEKVWAH (136 aa). Lysine 641 bears the N6-acetyllysine mark. Position 645 is a phosphoserine (serine 645). Residues 729 to 787 form the Tudor domain; that stretch reads APRRGEFCIAKFVDGEWYRARVEKVESPAKVHVFYIDYGNREILPSTRLGTLPPAFSTR. Threonine 779 carries the phosphothreonine modification. A phosphoserine mark is found at serine 785 and serine 909.

Forms a ternary complex with STAT6 and POLR2A. Associates with the RNA-induced silencing complex (RISC). Interacts with the RISC components AGO2, FMR1 and TNRC6A. Interacts with GTF2E1 and GTF2E2. Interacts with PIM1. Interacts with STAT5. Interacts with SYT11 (via C2 2 domain); the interaction with SYT11 is direct. Post-translationally, phosphorylated by PIM1 in vitro.

The protein localises to the cytoplasm. It is found in the nucleus. Its subcellular location is the melanosome. The catalysed reaction is Endonucleolytic cleavage to nucleoside 3'-phosphates and 3'-phosphooligonucleotide end-products.. Functionally, endonuclease that mediates miRNA decay of both protein-free and AGO2-loaded miRNAs. As part of its function in miRNA decay, regulates mRNAs involved in G1-to-S phase transition. Functions as a bridging factor between STAT6 and the basal transcription factor. Plays a role in PIM1 regulation of MYB activity. Functions as a transcriptional coactivator for STAT5. The chain is Staphylococcal nuclease domain-containing protein 1 (Snd1) from Mus musculus (Mouse).